We begin with the raw amino-acid sequence, 776 residues long: Lysyl oxidase homolog 2 (776 aa).

An N-terminal signal peptide occupies residues 1–25 (MELHFGSCLSGCLALLVLLPSLSLA). 4 SRCR domains span residues 61-162 (VRLA…VVCS), 191-305 (IRPI…VSCV), 329-428 (VRLR…VRCN), and 438-546 (VRLN…VACS). Disulfide bonds link cysteine 87-cysteine 151, cysteine 100-cysteine 161, cysteine 131-cysteine 141, cysteine 221-cysteine 294, cysteine 234-cysteine 304, cysteine 268-cysteine 278, cysteine 354-cysteine 417, cysteine 367-cysteine 427, and cysteine 398-cysteine 408. Asparagine 267 carries N-linked (GlcNAc...) asparagine glycosylation. A glycan (N-linked (GlcNAc...) asparagine) is linked at asparagine 291. Asparagine 458 is a glycosylation site (N-linked (GlcNAc...) asparagine). Cystine bridges form between cysteine 467/cysteine 532, cysteine 480/cysteine 545, and cysteine 514/cysteine 524. Positions 550–753 (PDLVLNAEIV…WMYNCHVGGA (204 aa)) are lysyl-oxidase like. Aspartate 551 and leucine 552 together coordinate Ca(2+). 4 disulfides stabilise this stretch: cysteine 575–cysteine 627, cysteine 581–cysteine 697, cysteine 659–cysteine 675, and cysteine 665–cysteine 687. Cu cation contacts are provided by histidine 628, histidine 630, and histidine 632. Asparagine 646 carries an N-linked (GlcNAc...) asparagine glycan. Positions 655 to 691 (KASFCLEDTECEGDIQKSYECANFGEQGITMGCWDMY) form a cross-link, lysine tyrosylquinone (Lys-Tyr). Tyrosine 691 is modified (2',4',5'-topaquinone). Residues glutamate 724, aspartate 726, asparagine 729, and asparagine 730 each coordinate Ca(2+). Cysteines 734 and 748 form a disulfide.

Belongs to the lysyl oxidase family. As to quaternary structure, component of some chromatin repressor complex. Interacts with SNAI1. Interacts with TAF10. Interacts with HSPA5. Interacts with EFEMP2. Cu cation serves as cofactor. The cofactor is lysine tyrosylquinone residue. Post-translationally, the lysine tyrosylquinone cross-link (LTQ) is generated by condensation of the epsilon-amino group of a lysine with a topaquinone produced by oxidation of tyrosine. N-glycosylated. N-glycosylation on Asn-458 and Asn-646 may be essential for proper folding and secretion; may be composed of a fucosylated carbohydrates attached to a trimannose N-linked glycan core. As to expression, ubiquitous. Highest expression in skin, lung and thymus. Present in chondrocytes: mainly expressed by chondrocytes in healing fractures and in epiphyseal growth plates (at protein level).

Its subcellular location is the secreted. It localises to the extracellular space. It is found in the extracellular matrix. The protein localises to the basement membrane. The protein resides in the nucleus. Its subcellular location is the chromosome. It localises to the endoplasmic reticulum. It carries out the reaction L-lysyl-[protein] + O2 + H2O = (S)-2-amino-6-oxohexanoyl-[protein] + H2O2 + NH4(+). Specifically inhibited by a mouse monoclonal antibody AB0023, inhibition occurs in a non-competitive manner. In terms of biological role, mediates the post-translational oxidative deamination of lysine residues on target proteins leading to the formation of deaminated lysine (allysine). Acts as a transcription corepressor and specifically mediates deamination of trimethylated 'Lys-4' of histone H3 (H3K4me3), a specific tag for epigenetic transcriptional activation. Shows no activity against histone H3 when it is trimethylated on 'Lys-9' (H3K9me3) or 'Lys-27' (H3K27me3) or when 'Lys-4' is monomethylated (H3K4me1) or dimethylated (H3K4me2). Also mediates deamination of methylated TAF10, a member of the transcription factor IID (TFIID) complex, which induces release of TAF10 from promoters, leading to inhibition of TFIID-dependent transcription. LOXL2-mediated deamination of TAF10 results in transcriptional repression of genes required for embryonic stem cell pluripotency including POU5F1/OCT4, NANOG, KLF4 and SOX2. Involved in epithelial to mesenchymal transition (EMT) via interaction with SNAI1 and participates in repression of E-cadherin, probably by mediating deamination of histone H3. During EMT, involved with SNAI1 in negatively regulating pericentromeric heterochromatin transcription. SNAI1 recruits LOXL2 to pericentromeric regions to oxidize histone H3 and repress transcription which leads to release of heterochromatin component CBX5/HP1A, enabling chromatin reorganization and acquisition of mesenchymal traits. Interacts with the endoplasmic reticulum protein HSPA5 which activates the IRE1-XBP1 pathway of the unfolded protein response, leading to expression of several transcription factors involved in EMT and subsequent EMT induction. When secreted into the extracellular matrix, promotes cross-linking of extracellular matrix proteins by mediating oxidative deamination of peptidyl lysine residues in precursors to fibrous collagen and elastin. Acts as a regulator of sprouting angiogenesis, probably via collagen IV scaffolding. Acts as a regulator of chondrocyte differentiation, probably by regulating expression of factors that control chondrocyte differentiation. In Mus musculus (Mouse), this protein is Lysyl oxidase homolog 2 (Loxl2).